The sequence spans 459 residues: Sensor histidine kinase SpaK (459 aa).

The Cytoplasmic portion of the chain corresponds to 1–18 (MGIGFKGRKTLLRELVKY). The helical transmembrane segment at 19–39 (MVTLCISLVVLALLYIFINTI) threads the bilayer. The Extracellular segment spans residues 40–155 (AMNTGFSHPA…RKYLPNYELT (116 aa)). Residues 156 to 176 (SICILIILLIIVISIITTYFA) form a helical membrane-spanning segment. Residues 177–459 (NRLRKHFETL…VRVKIPLRNE (283 aa)) are Cytoplasmic-facing. The region spanning 244-458 (ALAHEIKIPI…EVRVKIPLRN (215 aa)) is the Histidine kinase domain. Position 247 is a phosphohistidine; by autocatalysis (histidine 247).

The protein localises to the cell membrane. The enzyme catalyses ATP + protein L-histidine = ADP + protein N-phospho-L-histidine.. Its function is as follows. Member of the two-component regulatory system SpaK/SpaR involved in the regulation of the biosynthesis of lantibiotic subtilin. SpaK may function as a membrane-associated protein kinase that phosphorylates SpaR in response to environmental signals. The polypeptide is Sensor histidine kinase SpaK (spaK) (Bacillus subtilis).